Reading from the N-terminus, the 196-residue chain is uncharacterized protein (196 aa).

Belongs to the CDP-alcohol phosphatidyltransferase class-I family.

This is an uncharacterized protein from Aquifex aeolicus (strain VF5).